We begin with the raw amino-acid sequence, 215 residues long: Pyridoxine/pyridoxamine 5'-phosphate oxidase (215 aa).

Substrate is bound by residues 9–12 (RRDY) and Lys69. Residues 64 to 69 (RVLLLK), 79 to 80 (FT), Lys86, and Gln108 each bind FMN. 3 residues coordinate substrate: Tyr126, Arg130, and Ser134. FMN is bound by residues 143–144 (QS) and Trp188. 194-196 (RLH) contacts substrate. FMN is bound at residue Arg198.

It belongs to the pyridoxamine 5'-phosphate oxidase family. As to quaternary structure, homodimer. It depends on FMN as a cofactor.

The enzyme catalyses pyridoxamine 5'-phosphate + O2 + H2O = pyridoxal 5'-phosphate + H2O2 + NH4(+). It catalyses the reaction pyridoxine 5'-phosphate + O2 = pyridoxal 5'-phosphate + H2O2. It functions in the pathway cofactor metabolism; pyridoxal 5'-phosphate salvage; pyridoxal 5'-phosphate from pyridoxamine 5'-phosphate: step 1/1. The protein operates within cofactor metabolism; pyridoxal 5'-phosphate salvage; pyridoxal 5'-phosphate from pyridoxine 5'-phosphate: step 1/1. Functionally, catalyzes the oxidation of either pyridoxine 5'-phosphate (PNP) or pyridoxamine 5'-phosphate (PMP) into pyridoxal 5'-phosphate (PLP). This is Pyridoxine/pyridoxamine 5'-phosphate oxidase from Pseudomonas savastanoi pv. phaseolicola (strain 1448A / Race 6) (Pseudomonas syringae pv. phaseolicola (strain 1448A / Race 6)).